Here is a 261-residue protein sequence, read N- to C-terminus: Ribosomal RNA small subunit methyltransferase J (261 aa).

Residues 111–112 (RD), 127–128 (ER), 163–164 (SS), and aspartate 181 each bind S-adenosyl-L-methionine.

This sequence belongs to the methyltransferase superfamily. RsmJ family.

It is found in the cytoplasm. The enzyme catalyses guanosine(1516) in 16S rRNA + S-adenosyl-L-methionine = N(2)-methylguanosine(1516) in 16S rRNA + S-adenosyl-L-homocysteine + H(+). Functionally, specifically methylates the guanosine in position 1516 of 16S rRNA. In Shewanella sp. (strain MR-7), this protein is Ribosomal RNA small subunit methyltransferase J.